We begin with the raw amino-acid sequence, 209 residues long: NAD(P)H dehydrogenase (quinone) (209 aa).

A Flavodoxin-like domain is found at Val-4 to Val-199. FMN-binding positions include Ser-10 to Val-15 and Thr-87 to Tyr-89. Tyr-12 provides a ligand contact to NAD(+). Trp-107 contributes to the substrate binding site. FMN-binding positions include Ser-122–Gly-128 and His-143.

This sequence belongs to the WrbA family. FMN serves as cofactor.

The enzyme catalyses a quinone + NADH + H(+) = a quinol + NAD(+). It catalyses the reaction a quinone + NADPH + H(+) = a quinol + NADP(+). This chain is NAD(P)H dehydrogenase (quinone), found in Methanosarcina acetivorans (strain ATCC 35395 / DSM 2834 / JCM 12185 / C2A).